The primary structure comprises 971 residues: Translation initiation factor IF-2 (971 aa).

Residues 48–63 (DHLRKSHGATDGDKRK) are compositionally biased toward basic and acidic residues. Disordered stretches follow at residues 48–86 (DHLR…ARTI) and 100–381 (DDVA…STFQ). A compositionally biased stretch (low complexity) spans 105-114 (GADQGQAQVA). Basic and acidic residues predominate over residues 121-181 (ELKRREEEAR…EEEAATKRAA (61 aa)). The segment covering 182 to 202 (AEVAAAQQQAAAQQAAAEQEA) has biased composition (low complexity). Residues 210 to 261 (DEARAAAERAAQREAAKKAEDAAREAADKARAEQEEISKRRAAAEAEARAIR) show a composition bias toward basic and acidic residues. Pro residues predominate over residues 277–286 (PPKPVEPPKP). Residues 304-326 (ARPAVKKPAGAAAPATTQAPAGA) are compositionally biased toward low complexity. Over residues 356 to 369 (SSGGVDRGWRGGPK) the composition is skewed to gly residues. One can recognise a tr-type G domain in the interval 471 to 640 (PRPPVVTVMG…LLQAEVLELK (170 aa)). The segment at 480 to 487 (GHVDHGKT) is G1. 480–487 (GHVDHGKT) lines the GTP pocket. The tract at residues 505 to 509 (GITQH) is G2. Residues 526–529 (DTPG) are G3. Residues 526–530 (DTPGH) and 580–583 (NKID) each bind GTP. Positions 580-583 (NKID) are G4. The G5 stretch occupies residues 616–618 (SAK).

The protein belongs to the TRAFAC class translation factor GTPase superfamily. Classic translation factor GTPase family. IF-2 subfamily.

The protein resides in the cytoplasm. In terms of biological role, one of the essential components for the initiation of protein synthesis. Protects formylmethionyl-tRNA from spontaneous hydrolysis and promotes its binding to the 30S ribosomal subunits. Also involved in the hydrolysis of GTP during the formation of the 70S ribosomal complex. The protein is Translation initiation factor IF-2 of Burkholderia orbicola (strain AU 1054).